A 927-amino-acid polypeptide reads, in one-letter code: GPI inositol-deacylase (927 aa).

Over 1-4 the chain is Cytoplasmic; sequence MNPL. The chain crosses the membrane as a helical span at residues 5–25; that stretch reads SAVFNSVVLVLLALGVTDVFF. At 26 to 595 the chain is on the lumenal side; it reads SYESSRCSMT…QIVRFHGIYL (570 aa). N-linked (GlcNAc...) asparagine glycosylation is found at Asn-75 and Asn-155. Ser-169 is an active-site residue. 6 N-linked (GlcNAc...) asparagine glycosylation sites follow: Asn-230, Asn-362, Asn-397, Asn-432, Asn-444, and Asn-482. A helical transmembrane segment spans residues 596–616; it reads PVYIVANLLLAYGAQLHSILI. Over 617 to 672 the chain is Cytoplasmic; sequence QGSCMDLDLSFDVAAKPYKVDPVLIICKYLLNYKWFKNYWDGLMLPQLDAVQLHAY. Residues 673-693 form a helical membrane-spanning segment; the sequence is GFWFPLASLFFFIFGTSIAYW. Residues 694 to 733 are Lumenal-facing; that stretch reads SSIGLQAAVRILSSLWIYLKRPSMFPKESKCITYRVYAET. The chain crosses the membrane as a helical span at residues 734–754; that stretch reads LFFAFISWRSCGTFSLLLVFL. Over 755 to 821 the chain is Cytoplasmic; that stretch reads RYLSKVLILY…KALDDCLKMH (67 aa). Residues 822 to 842 traverse the membrane as a helical segment; sequence FTILHLNLWIVLLGLPSFIYW. The Lumenal portion of the chain corresponds to 843-858; sequence LKTLRYTIQLDPDPNR. A helical transmembrane segment spans residues 859–879; that stretch reads VSALVLIFILEILMNSTTSAI. Over 880–887 the chain is Cytoplasmic; the sequence is KSSVCLKT. A helical transmembrane segment spans residues 888-908; it reads AAVLQLPLSIIVVAFGTLHLY. The Lumenal portion of the chain corresponds to 909–927; that stretch reads RISNLIAFSLFLHVVCCFV.

This sequence belongs to the GPI inositol-deacylase family.

It localises to the endoplasmic reticulum membrane. Functionally, GPI inositol-deacylase that catalyzes the remove of the acyl chain linked to the 2-OH position of inositol ring from the GPI-anchored protein (GPI-AP) in the endoplasmic reticulum. Initiates the post-attachment remodeling phase of GPI-AP biogenesis and participates in endoplasmic reticulum (ER)-to-Golgi transport of GPI-anchored protein. The polypeptide is GPI inositol-deacylase (Xenopus laevis (African clawed frog)).